A 345-amino-acid chain; its full sequence is Esterase (345 aa).

Positions 1–39 are cleaved as a signal peptide; the sequence is MSSAMRKTTNSPVVRRLTAAAVALGSCLALAGPAGSAGA. Disulfide bonds link cysteine 73–cysteine 103, cysteine 156–cysteine 180, and cysteine 236–cysteine 294.

Its subcellular location is the secreted. The polypeptide is Esterase (estA) (Streptomyces scabiei).